A 658-amino-acid chain; its full sequence is Glycogen debranching enzyme (658 aa).

Aspartate 336 (nucleophile) is an active-site residue. Residue glutamate 371 is the Proton donor of the active site.

It belongs to the glycosyl hydrolase 13 family.

The catalysed reaction is Hydrolysis of (1-&gt;6)-alpha-D-glucosidic linkages to branches with degrees of polymerization of three or four glucose residues in limit dextrin.. The protein operates within glycan degradation; glycogen degradation. Its function is as follows. Removes maltotriose and maltotetraose chains that are attached by 1,6-alpha-linkage to the limit dextrin main chain, generating a debranched limit dextrin. This Klebsiella pneumoniae (strain 342) protein is Glycogen debranching enzyme.